We begin with the raw amino-acid sequence, 167 residues long: Small ribosomal subunit protein uS5 (167 aa).

Residues 12–75 form the S5 DRBM domain; it reads LNEKLIAVNR…EKARRNIRDV (64 aa).

The protein belongs to the universal ribosomal protein uS5 family. Part of the 30S ribosomal subunit. Contacts proteins S4 and S8.

With S4 and S12 plays an important role in translational accuracy. In terms of biological role, located at the back of the 30S subunit body where it stabilizes the conformation of the head with respect to the body. This is Small ribosomal subunit protein uS5 from Psychromonas ingrahamii (strain DSM 17664 / CCUG 51855 / 37).